Consider the following 623-residue polypeptide: Leucine aminopeptidase 2 (623 aa).

The interval 1–23 is disordered; that stretch reads MRRCTKNSRSTNPPRDPNTLSNY. Residues 7-23 are compositionally biased toward polar residues; that stretch reads NSRSTNPPRDPNTLSNY. A peptide-binding positions include 145–147 and 277–282; these read QCQ and PYGGME. H306 contributes to the Zn(2+) binding site. E307 acts as the Proton acceptor in catalysis. Positions 310 and 329 each coordinate Zn(2+). Catalysis depends on Y394, which acts as the Proton donor.

This sequence belongs to the peptidase M1 family. Requires Zn(2+) as cofactor.

It is found in the cytoplasm. The protein resides in the nucleus. It catalyses the reaction an epoxide + H2O = an ethanediol. In terms of biological role, aminopeptidase that preferentially cleaves di- and tripeptides. Also has low epoxide hydrolase activity (in vitro). Can hydrolyze the epoxide leukotriene LTA(4) but it forms preferentially 5,6-dihydroxy-7,9,11,14-eicosatetraenoic acid rather than the cytokine leukotriene B(4) as the product compared to the homologous mammalian enzyme (in vitro). This Ajellomyces capsulatus (strain NAm1 / WU24) (Darling's disease fungus) protein is Leucine aminopeptidase 2.